A 794-amino-acid polypeptide reads, in one-letter code: Phosphoribosylformylglycinamidine synthase subunit PurL (794 aa).

Histidine 47 is an active-site residue. ATP is bound by residues tyrosine 50 and lysine 89. A Mg(2+)-binding site is contributed by glutamate 91. Substrate is bound by residues 92–95 (SHNH) and arginine 114. Residue histidine 93 is the Proton acceptor of the active site. Aspartate 115 contacts Mg(2+). Glutamine 238 lines the substrate pocket. Residue aspartate 266 participates in Mg(2+) binding. Position 310 to 312 (310 to 312 (ESQ)) interacts with substrate. Aspartate 522 and glycine 559 together coordinate ATP. A Mg(2+)-binding site is contributed by asparagine 560. Serine 562 lines the substrate pocket.

This sequence belongs to the FGAMS family. As to quaternary structure, monomer. Part of the FGAM synthase complex composed of 1 PurL, 1 PurQ and 2 PurS subunits.

The protein localises to the cytoplasm. The catalysed reaction is N(2)-formyl-N(1)-(5-phospho-beta-D-ribosyl)glycinamide + L-glutamine + ATP + H2O = 2-formamido-N(1)-(5-O-phospho-beta-D-ribosyl)acetamidine + L-glutamate + ADP + phosphate + H(+). Its pathway is purine metabolism; IMP biosynthesis via de novo pathway; 5-amino-1-(5-phospho-D-ribosyl)imidazole from N(2)-formyl-N(1)-(5-phospho-D-ribosyl)glycinamide: step 1/2. Its function is as follows. Part of the phosphoribosylformylglycinamidine synthase complex involved in the purines biosynthetic pathway. Catalyzes the ATP-dependent conversion of formylglycinamide ribonucleotide (FGAR) and glutamine to yield formylglycinamidine ribonucleotide (FGAM) and glutamate. The FGAM synthase complex is composed of three subunits. PurQ produces an ammonia molecule by converting glutamine to glutamate. PurL transfers the ammonia molecule to FGAR to form FGAM in an ATP-dependent manner. PurS interacts with PurQ and PurL and is thought to assist in the transfer of the ammonia molecule from PurQ to PurL. The polypeptide is Phosphoribosylformylglycinamidine synthase subunit PurL (Prochlorococcus marinus (strain MIT 9303)).